The sequence spans 410 residues: MKIYLVGGAVRDALLGQPAGDRDWVVVGADQAQMQALGYKPVGKDFPVFLHPRSGEEYALARTERKSGRGYRGFVVDADPSVTLEEDLLRRDFTINAIARDEASGEVFDPYGGVRDLQQRVLRHVGPAFVEDPVRVLRAARFMARLAPLGFGIAPETAALMREMADSGELDSLVPERVWQELRRVLGSAQPSAFLRTLHDTGALRAILPELDALYGVPQRAEFHPEVDTGVHQEMVSDMAARLAPGDALVGFAALTHDLGKALTPPEQWPRHVMHEQRGVAPLQALCERLKVPQDYRQLAVTACREHLNVHRLPELRDRTVHELLVRCDGFRRPERIAQLALVCEADKRGRLGSEEAAYPQGPELQRVHAAALAINARDLAADGLQGPQIGEALASARIAAIAQARSLRQ.

2 residues coordinate ATP: glycine 8 and arginine 11. The CTP site is built by glycine 8 and arginine 11. Positions 21 and 23 each coordinate Mg(2+). The ATP site is built by arginine 91, arginine 138, and arginine 141. CTP is bound by residues arginine 91, arginine 138, and arginine 141. One can recognise an HD domain in the interval 229 to 347; it reads TGVHQEMVSD…AQLALVCEAD (119 aa).

This sequence belongs to the tRNA nucleotidyltransferase/poly(A) polymerase family. Bacterial CCA-adding enzyme type 1 subfamily. Monomer. Can also form homodimers and oligomers. The cofactor is Mg(2+). Requires Ni(2+) as cofactor.

The enzyme catalyses a tRNA precursor + 2 CTP + ATP = a tRNA with a 3' CCA end + 3 diphosphate. It carries out the reaction a tRNA with a 3' CCA end + 2 CTP + ATP = a tRNA with a 3' CCACCA end + 3 diphosphate. Functionally, catalyzes the addition and repair of the essential 3'-terminal CCA sequence in tRNAs without using a nucleic acid template. Adds these three nucleotides in the order of C, C, and A to the tRNA nucleotide-73, using CTP and ATP as substrates and producing inorganic pyrophosphate. tRNA 3'-terminal CCA addition is required both for tRNA processing and repair. Also involved in tRNA surveillance by mediating tandem CCA addition to generate a CCACCA at the 3' terminus of unstable tRNAs. While stable tRNAs receive only 3'-terminal CCA, unstable tRNAs are marked with CCACCA and rapidly degraded. The chain is Multifunctional CCA protein from Xanthomonas campestris pv. campestris (strain B100).